The chain runs to 81 residues: Protein Vpu (81 aa).

Residues 1-7 (MQPLVII) lie on the Extracellular side of the membrane. The helical transmembrane segment at 8–28 (AIAALVVAIIIAIVVWTIVYI) threads the bilayer. At 29-81 (EYRRIKRQRKIDCLIDRIRERAEDSGNESEGEREELSKLVEMGHHAPWDVDDL) the chain is on the cytoplasmic side. The interval 50-81 (AEDSGNESEGEREELSKLVEMGHHAPWDVDDL) is disordered. 2 positions are modified to phosphoserine; by host CK2: Ser-53 and Ser-57. Residues 62 to 81 (EELSKLVEMGHHAPWDVDDL) are compositionally biased toward basic and acidic residues.

It belongs to the HIV-1 VPU protein family. In terms of assembly, homopentamer. Interacts with host CD4 and BRTC; these interactions induce proteasomal degradation of CD4. Interacts with host BST2; this interaction leads to the degradation of host BST2. Interacts with host FBXW11. Interacts with host AP1M1; this interaction plays a role in the mistrafficking and subsequent degradation of host BST2. Interacts with host RANBP2; this interaction allows Vpu to down-regulate host BLM sumoylation. Post-translationally, phosphorylated by host CK2. This phosphorylation is necessary for interaction with human BTRC and degradation of CD4.

The protein resides in the host membrane. With respect to regulation, ion channel activity is inhibited by hexamethylene amiloride in vitro. Functionally, enhances virion budding by targeting host CD4 and Tetherin/BST2 to proteasome degradation. Degradation of CD4 prevents any unwanted premature interactions between viral Env and its host receptor CD4 in the endoplasmic reticulum. Degradation of antiretroviral protein Tetherin/BST2 is important for virion budding, as BST2 tethers new viral particles to the host cell membrane. Mechanistically, Vpu bridges either CD4 or BST2 to BTRC, a substrate recognition subunit of the Skp1/Cullin/F-box protein E3 ubiquitin ligase, induces their ubiquitination and subsequent proteasomal degradation. The alteration of the E3 ligase specificity by Vpu seems to promote the degradation of host IKBKB, leading to NF-kappa-B down-regulation and subsequent apoptosis. Acts as a viroporin that forms an oligomeric ion channel in membranes. Modulates the host DNA repair mechanisms to promote degradation of nuclear viral cDNA in cells that are already productively infected in order to suppress immune sensing and proviral hyper-integration (superinfection). Manipulates PML-NBs and modulates SUMOylation of host BLM protein thereby enhancing its DNA-end processing activity toward viral unintegrated linear DNA. Also inhibits RAD52-mediated homologous repair of viral cDNA, preventing the generation of dead-end circular forms of single copies of the long terminal repeat and permitting sustained nucleolytic attack. The chain is Protein Vpu from Human immunodeficiency virus type 1 group M subtype D (isolate NDK) (HIV-1).